We begin with the raw amino-acid sequence, 492 residues long: Dynein regulatory complex subunit 2 (492 aa).

3 coiled-coil regions span residues 16–95 (LTEE…FERV), 256–318 (VQSA…AAQA), and 373–401 (LSEE…HDYS).

Belongs to the DRC2 family. In terms of assembly, component of the nexin-dynein regulatory complex (N-DRC).

It localises to the cytoplasm. The protein localises to the cytoskeleton. It is found in the flagellum basal body. The protein resides in the cell projection. Its subcellular location is the cilium. It localises to the flagellum. The protein localises to the flagellum axoneme. Functionally, component of the nexin-dynein regulatory complex (N-DRC), a key regulator of ciliary/flagellar motility which maintains the alignment and integrity of the distal axoneme and regulates microtubule sliding in motile axonemes. Plays a critical role in the assembly of N-DRC and also stabilizes the assembly of multiple inner dynein arms and radial spokes. Coassembles with DRC1 to form a central scaffold needed for assembly of the N-DRC and its attachment to the outer doublet microtubules. This Danio rerio (Zebrafish) protein is Dynein regulatory complex subunit 2 (ccdc65).